Reading from the N-terminus, the 2522-residue chain is Unconventional myosin-IXAa (2522 aa).

The 99-residue stretch at 15-113 folds into the Ras-associating domain; sequence SELTLRIYPG…YRFLLREKNL (99 aa). In terms of domain architecture, Myosin motor spans 147–1007; it reads KDFDDLCNLP…ERQRLQDLLH (861 aa). A helical transmembrane segment spans residues 176–196; that stretch reads IYTYVGSILIVINPFKFLPIY. 240–247 contributes to the ATP binding site; it reads GESGSGKT. Residues 767–802 form a disordered region; it reads VNRRNPRTPLSDLQGSNAINQREGWNGRPGRQNRLS. Positions 777 to 786 are enriched in polar residues; sequence SDLQGSNAIN. The segment at 888 to 910 is actin-binding; it reads LNKLMETLGQSQPYFVKCIRSNS. IQ domains are found at residues 1012-1039, 1063-1092, 1102-1131, and 1125-1154; these read SRIV…AACQ, QEGA…ASVL, QRRA…ATIR, and QRDA…QRLK. The tract at residues 1012-1149 is neck or regulatory domain; the sequence is SRIVYLQRRF…LARQRFRELQ (138 aa). The interval 1150-2497 is tail; it reads KQRLKITHLP…LQGAKSSPQR (1348 aa). Disordered stretches follow at residues 1218–1254, 1318–1409, 1424–1612, 1630–1754, 1799–1827, and 1962–1983; these read GMAP…RRMR, DKAP…STRR, NEAD…GNIF, NQEK…GRVR, RLSP…VKRR, and LDSS…KDTD. Basic and acidic residues predominate over residues 1229–1242; sequence TIRERPRTLEDPNQ. Polar residues-rich tracts occupy residues 1330 to 1349 and 1366 to 1390; these read SPSS…STPD and SLPT…NSVT. 2 stretches are compositionally biased toward basic and acidic residues: residues 1399-1408 and 1426-1435; these read PSKDKKESTR and ADVKPLEVKD. Positions 1437-1454 are enriched in polar residues; it reads AAQTSEPPSPAQPSTDSS. Residues 1456-1525 are a coiled coil; it reads VLEKLEKLNE…LRRIEQSRQE (70 aa). 4 stretches are compositionally biased toward basic and acidic residues: residues 1458–1484, 1492–1523, 1549–1566, and 1580–1589; these read EKLE…EMME, ILEE…EQSR, PARE…RPKD, and LESRGDEARS. Polar residues-rich tracts occupy residues 1594 to 1604 and 1631 to 1641; these read KPSNQNVNISM and QEKTPGAQNEV. The span at 1656–1665 shows a compositional bias: basic residues; the sequence is PGHKKARMAR. The span at 1681–1690 shows a compositional bias: acidic residues; that stretch reads GESEEEEYDE. Composition is skewed to basic and acidic residues over residues 1738 to 1753 and 1810 to 1822; these read LGKH…DGRV and LQRE…EPSP. The Phorbol-ester/DAG-type zinc-finger motif lies at 1990-2039; that stretch reads GHIFKSTQYSIPTYCEYCSSLIWMMDKACVCKLCRYACHRKCCQKMTTKC. Positions 2054–2242 constitute a Rho-GAP domain; that stretch reads VELSRLTNDE…LIICEQMNKY (189 aa). Disordered regions lie at residues 2274 to 2325 and 2348 to 2522; these read PVHR…QEEK and LEPR…EFMV. The stretch at 2317-2344 forms a coiled coil; it reads QVAMQQEEKVLTEQIESLQKEKEELTFE. Residues 2366 to 2383 show a composition bias toward polar residues; it reads TADSSENLNVDSEGATSD. A compositionally biased stretch (low complexity) spans 2413-2429; sequence SLDSIDSCSTVSSVSSS. Residues 2436–2448 show a composition bias toward basic residues; that stretch reads RTHKLSLRSKSPS. The segment covering 2497-2506 has biased composition (basic and acidic residues); that stretch reads RHREQKKDPE.

It belongs to the TRAFAC class myosin-kinesin ATPase superfamily. Myosin family.

It is found in the membrane. It localises to the cytoplasm. The protein localises to the synapse. The protein resides in the cell projection. Its subcellular location is the growth cone. Functionally, myosins are actin-based motor molecules with ATPase activity. Unconventional myosins serve in intracellular movements. Regulates Rho by stimulating it's GTPase activity in neurons. Required for the regulation of neurite branching and motor neuron axon guidance. This chain is Unconventional myosin-IXAa (myo9aa), found in Danio rerio (Zebrafish).